The chain runs to 715 residues: Fatty acid oxidation complex subunit alpha (715 aa).

The tract at residues Met-1–Ala-190 is enoyl-CoA hydratase/isomerase. Asp-297 provides a ligand contact to substrate. A 3-hydroxyacyl-CoA dehydrogenase region spans residues Lys-312–Gly-715. NAD(+) is bound by residues Met-325, Asp-344, Val-401–Glu-403, Lys-408, and Ser-430. The active-site For 3-hydroxyacyl-CoA dehydrogenase activity is His-451. Residue Asn-454 participates in NAD(+) binding. Positions 501 and 660 each coordinate substrate.

The protein in the N-terminal section; belongs to the enoyl-CoA hydratase/isomerase family. In the C-terminal section; belongs to the 3-hydroxyacyl-CoA dehydrogenase family. As to quaternary structure, heterotetramer of two alpha chains (FadB) and two beta chains (FadA).

The catalysed reaction is a (3S)-3-hydroxyacyl-CoA + NAD(+) = a 3-oxoacyl-CoA + NADH + H(+). The enzyme catalyses a (3S)-3-hydroxyacyl-CoA = a (2E)-enoyl-CoA + H2O. It catalyses the reaction a 4-saturated-(3S)-3-hydroxyacyl-CoA = a (3E)-enoyl-CoA + H2O. It carries out the reaction (3S)-3-hydroxybutanoyl-CoA = (3R)-3-hydroxybutanoyl-CoA. The catalysed reaction is a (3Z)-enoyl-CoA = a 4-saturated (2E)-enoyl-CoA. The enzyme catalyses a (3E)-enoyl-CoA = a 4-saturated (2E)-enoyl-CoA. It participates in lipid metabolism; fatty acid beta-oxidation. Its function is as follows. Involved in the aerobic and anaerobic degradation of long-chain fatty acids via beta-oxidation cycle. Catalyzes the formation of 3-oxoacyl-CoA from enoyl-CoA via L-3-hydroxyacyl-CoA. It can also use D-3-hydroxyacyl-CoA and cis-3-enoyl-CoA as substrate. This chain is Fatty acid oxidation complex subunit alpha, found in Pseudomonas paraeruginosa (strain DSM 24068 / PA7) (Pseudomonas aeruginosa (strain PA7)).